The sequence spans 2224 residues: Coagulation factor V (2224 aa).

An N-terminal signal peptide occupies residues 1-28; sequence MFPGCPRLWVLVVLGTSWVGWGSQGTEA. Plastocyanin-like domains lie at 30-193, 203-329, 348-526, and 536-684; these read QLRQ…LLIC, TQKT…IKNC, KRWE…LLIC, and IQRA…DVKC. F5/8 type A domains are found at residues 30–329 and 348–684; these read QLRQ…IKNC and KRWE…DVKC. Residues asparagine 51 and asparagine 55 are each glycosylated (N-linked (GlcNAc...) asparagine). Ca(2+) contacts are provided by aspartate 139 and aspartate 140. Cysteine 167 and cysteine 193 are oxidised to a cystine. Asparagine 239, asparagine 297, asparagine 382, asparagine 460, and asparagine 468 each carry an N-linked (GlcNAc...) asparagine glycan. The cysteines at positions 248 and 329 are disulfide-linked. Cysteine 500 and cysteine 526 form a disulfide bridge. A glycan (N-linked (GlcNAc...) asparagine) is linked at asparagine 554. The cysteines at positions 603 and 684 are disulfide-linked. Threonine 640 is modified (phosphothreonine). The interval 692–1573 is b; that stretch reads SYEIFEPPES…PDNIAAWYLR (882 aa). Tyrosine 693, tyrosine 724, and tyrosine 726 each carry sulfotyrosine. A propeptide spans 738–1573 (activation peptide (connecting region)); sequence SFRNSSLNQE…PDNIAAWYLR (836 aa). Residues asparagine 741, asparagine 752, asparagine 760, asparagine 776, and asparagine 782 are each glycosylated (N-linked (GlcNAc...) asparagine). Threonine 805 carries O-linked (GalNAc...) threonine glycosylation. Asparagine 821 carries an N-linked (GlcNAc...) asparagine glycan. A compositionally biased stretch (polar residues) spans 822 to 831; the sequence is SSTAEHSSPY. The segment at 822–842 is disordered; the sequence is SSTAEHSSPYSEDPIEDPLQP. Residue serine 859 is modified to Phosphoserine; by FAM20C. The interval 894–927 is disordered; sequence LSQDTGSPSGMRPWEDLPSQDTGSPSRMRPWKDP. 2 tandem repeats follow at residues 895 to 911 and 912 to 928. The 2 X 17 AA tandem repeats stretch occupies residues 895–928; that stretch reads SQDTGSPSGMRPWEDLPSQDTGSPSRMRPWKDPP. 2 N-linked (GlcNAc...) asparagine glycosylation sites follow: asparagine 938 and asparagine 977. 2 disordered regions span residues 982–1001 and 1029–1048; these read WGESTPLANKPGKQSGHPKF and TRKKKKEKHTHHAPLSPRTF. A compositionally biased stretch (basic residues) spans 1029-1040; it reads TRKKKKEKHTHH. Asparagine 1074, asparagine 1083, asparagine 1103, and asparagine 1106 each carry an N-linked (GlcNAc...) asparagine glycan. Positions 1097-1157 are disordered; sequence LPDHNQNSSN…SSSPELSEML (61 aa). Residues 1099–1111 are compositionally biased toward polar residues; it reads DHNQNSSNDTGQA. The segment covering 1139-1154 has biased composition (low complexity); the sequence is HSTSDPSHRSSSPELS. Repeat copies occupy residues 1185–1193, 1194–1202, 1203–1211, 1212–1220, 1221–1229, 1230–1238, 1239–1247, 1248–1256, 1257–1265, 1266–1274, 1275–1283, 1284–1292, 1293–1301, 1302–1310, 1311–1319, 1320–1328, 1329–1337, 1338–1346, 1347–1355, 1356–1364, 1365–1373, 1374–1382, 1383–1391, 1392–1400, 1401–1409, 1410–1418, 1419–1427, 1428–1436, 1437–1445, 1446–1454, 1455–1463, 1464–1472, 1473–1481, 1482–1490, and 1493–1501. Residues 1185 to 1501 are 35 X 9 AA approximate tandem repeats of [TNP]-L-S-P-D-L-S-Q-T; it reads VISPDLSQVT…SPSSPTLNDT (317 aa). The interval 1341–1367 is disordered; sequence PELSQTNLSPALGQMPLSPDPSHTTLS. Asparagine 1479 carries N-linked (GlcNAc...) asparagine glycosylation. N-linked (GlcNAc...) asparagine glycosylation is present at asparagine 1499. Tyrosine 1522, tyrosine 1538, and tyrosine 1543 each carry sulfotyrosine. Asparagine 1559 carries N-linked (GlcNAc...) asparagine glycosylation. Plastocyanin-like domains lie at 1578 to 1751 and 1761 to 1907; these read NRRN…LLIC and NMPM…DRDC. Residues 1578–1907 form the F5/8 type A 3 domain; sequence NRRNYYIAAE…TPFLIMDRDC (330 aa). Sulfotyrosine is present on tyrosine 1593. Asparagine 1703 carries an N-linked (GlcNAc...) asparagine glycan. Cysteine 1725 and cysteine 1751 are joined by a disulfide. Positions 1843 and 1845 each coordinate Cu cation. Intrachain disulfides connect cysteine 1907/cysteine 2061 and cysteine 2066/cysteine 2221. 2 consecutive F5/8 type C domains span residues 1907 to 2061 and 2066 to 2221; these read CRMP…LQGC and CSTP…LFGC. 2 N-linked (GlcNAc...) asparagine glycosylation sites follow: asparagine 2010 and asparagine 2209.

Belongs to the multicopper oxidase family. As to quaternary structure, factor Va, the activated form of factor V, is composed of a heavy chain and a light chain, non-covalently bound. The interaction between the two chains is calcium-dependent. Forms heterodimer with SERPINA5. Post-translationally, thrombin activates factor V proteolytically to the active cofactor, factor Va (formation of a heavy chain at the N-terminus and a light chain at the C-terminus). Sulfation is required for efficient thrombin cleavage and activation and for full procoagulant activity. In terms of processing, activated protein C inactivates factor V and factor Va by proteolytic degradation. Post-translationally, phosphorylated by FAM20C in the extracellular medium. In terms of tissue distribution, plasma.

It is found in the secreted. Its activity is regulated as follows. Inhibited by SERPINA5. In terms of biological role, central regulator of hemostasis. It serves as a critical cofactor for the prothrombinase activity of factor Xa that results in the activation of prothrombin to thrombin. This is Coagulation factor V (F5) from Homo sapiens (Human).